The sequence spans 58 residues: Large ribosomal subunit protein eL24 (58 aa).

Zn(2+) is bound by residues C6, C9, C32, and C36. Residues 6–36 (CSFCGAEIPPGYGIMYVRNDGTIQRYCSRKC) form a C4-type zinc finger.

It belongs to the eukaryotic ribosomal protein eL24 family. Part of the 50S ribosomal subunit. Forms a cluster with proteins L3 and L14. It depends on Zn(2+) as a cofactor.

Binds to the 23S rRNA. This chain is Large ribosomal subunit protein eL24, found in Pyrobaculum neutrophilum (strain DSM 2338 / JCM 9278 / NBRC 100436 / V24Sta) (Thermoproteus neutrophilus).